The primary structure comprises 229 residues: Glutamine amidotransferase-like class 1 domain-containing protein 1 (229 aa).

The N-terminal stretch at 1-34 is a signal peptide; sequence MKKQGAPVSGGGTERLTKPSCLMVGSAVAEGVSA. N-linked (GlcNAc...) asparagine glycans are attached at residues asparagine 154 and asparagine 212.

This sequence belongs to the peptidase C56 family. As to quaternary structure, homotetramer. Component of the FERRY complex.

It localises to the secreted. It is found in the early endosome. In terms of biological role, component of the FERRY complex (Five-subunit Endosomal Rab5 and RNA/ribosome intermediary). The FERRY complex directly interacts with mRNAs and RAB5A, and functions as a RAB5A effector involved in the localization and the distribution of specific mRNAs most likely by mediating their endosomal transport. The complex recruits mRNAs and ribosomes to early endosomes through direct mRNA-interaction. In Xenopus laevis (African clawed frog), this protein is Glutamine amidotransferase-like class 1 domain-containing protein 1.